The following is a 385-amino-acid chain: Leucine aminopeptidase 1 (385 aa).

A signal peptide spans 1 to 14 (MKFLTLALSATATA). Positions 15 to 85 (MIIVNPEQQP…YGTLHTTRVV (71 aa)) are excised as a propeptide. 4 residues coordinate Zn(2+): histidine 185, aspartate 204, glutamate 243, and aspartate 270. A disulfide bridge links cysteine 319 with cysteine 323. Histidine 352 contacts Zn(2+).

Belongs to the peptidase M28 family. M28E subfamily. In terms of assembly, monomer. Requires Zn(2+) as cofactor.

Its subcellular location is the secreted. Its function is as follows. Extracellular aminopeptidase that allows assimilation of proteinaceous substrates. This Penicillium rubens (strain ATCC 28089 / DSM 1075 / NRRL 1951 / Wisconsin 54-1255) (Penicillium chrysogenum) protein is Leucine aminopeptidase 1 (lap1).